Reading from the N-terminus, the 229-residue chain is Meiotically up-regulated gene 31 protein (229 aa).

Disordered stretches follow at residues 16-68 (EDSA…EEDK) and 189-229 (GLPE…TTWA).

Its subcellular location is the endoplasmic reticulum. Its function is as follows. Has a role in meiosis. In Schizosaccharomyces pombe (strain 972 / ATCC 24843) (Fission yeast), this protein is Meiotically up-regulated gene 31 protein (mug31).